Here is a 571-residue protein sequence, read N- to C-terminus: Proline--tRNA ligase (571 aa).

This sequence belongs to the class-II aminoacyl-tRNA synthetase family. ProS type 1 subfamily. In terms of assembly, homodimer.

Its subcellular location is the cytoplasm. The catalysed reaction is tRNA(Pro) + L-proline + ATP = L-prolyl-tRNA(Pro) + AMP + diphosphate. Its function is as follows. Catalyzes the attachment of proline to tRNA(Pro) in a two-step reaction: proline is first activated by ATP to form Pro-AMP and then transferred to the acceptor end of tRNA(Pro). As ProRS can inadvertently accommodate and process non-cognate amino acids such as alanine and cysteine, to avoid such errors it has two additional distinct editing activities against alanine. One activity is designated as 'pretransfer' editing and involves the tRNA(Pro)-independent hydrolysis of activated Ala-AMP. The other activity is designated 'posttransfer' editing and involves deacylation of mischarged Ala-tRNA(Pro). The misacylated Cys-tRNA(Pro) is not edited by ProRS. The sequence is that of Proline--tRNA ligase from Histophilus somni (strain 129Pt) (Haemophilus somnus).